The sequence spans 203 residues: IQ domain-containing protein F3 (203 aa).

Over residues 1–12 the composition is skewed to basic and acidic residues; that stretch reads MELDQDKKKETP. Residues 1–111 form a disordered region; sequence MELDQDKKKE…CETQEADRSE (111 aa). The stretch at 13–82 forms a coiled coil; the sequence is EETENVNEVQ…EADKAILERS (70 aa). The segment covering 29-38 has biased composition (acidic residues); it reads DEETEAEAEE. The span at 39–51 shows a compositional bias: basic and acidic residues; the sequence is ADKAILERSDSVK. Residues 64-73 are compositionally biased toward acidic residues; that stretch reads DEETEAEAEE. Basic and acidic residues-rich tracts occupy residues 74–86 and 96–111; these read ADKAILERSDSVK and QIQEEKCETQEADRSE. Residues 129–158 form the IQ domain; the sequence is VMLAGVKIQAWWRGTLVRRTLLLAALNAWT.

The sequence is that of IQ domain-containing protein F3 (Iqcf3) from Mus musculus (Mouse).